The chain runs to 380 residues: Cytochrome b (380 aa).

4 helical membrane passes run 33–53, 77–98, 113–133, and 178–198; these read FGSL…FLAM, WLIR…YMHI, WNIG…GYVL, and FFAF…LHLL. 2 residues coordinate heme b: H83 and H97. H182 and H196 together coordinate heme b. Residue H201 coordinates a ubiquinone. Helical transmembrane passes span 226–246, 288–308, 320–340, and 347–367; these read YKDL…ALFA, LGGV…PILH, LTQF…WIGG, and FIII…VLAP.

It belongs to the cytochrome b family. In terms of assembly, the cytochrome bc1 complex contains 3 respiratory subunits (MT-CYB, CYC1 and UQCRFS1), 2 core proteins (UQCRC1 and UQCRC2) and probably 6 low-molecular weight proteins. Heme b is required as a cofactor.

The protein resides in the mitochondrion inner membrane. Functionally, component of the ubiquinol-cytochrome c reductase complex (complex III or cytochrome b-c1 complex) that is part of the mitochondrial respiratory chain. The b-c1 complex mediates electron transfer from ubiquinol to cytochrome c. Contributes to the generation of a proton gradient across the mitochondrial membrane that is then used for ATP synthesis. In Salmo salar (Atlantic salmon), this protein is Cytochrome b (mt-cyb).